The primary structure comprises 174 residues: Protein C (174 aa).

This sequence belongs to the morbillivirus protein C family.

The protein is Protein C (P/V/C) of Canine distemper virus (strain Onderstepoort) (CDV).